A 735-amino-acid chain; its full sequence is Translation initiation factor IF-2 (735 aa).

Basic and acidic residues-rich tracts occupy residues 52–66 and 101–117; these read VNSE…EKPK and KGKE…EKKL. Positions 52-154 are disordered; sequence VNSEKKAEKK…PAKKEKELPK (103 aa). Residues 121–133 are compositionally biased toward basic residues; that stretch reads AKKKGKGPMKGKK. A compositionally biased stretch (low complexity) spans 134 to 145; the sequence is QAAPASKQAQQP. In terms of domain architecture, tr-type G spans 236–405; the sequence is ERPPVVTIMG…LLVSEMEELK (170 aa). Residues 245-252 are G1; the sequence is GHVDHGKT. 245–252 contacts GTP; the sequence is GHVDHGKT. The tract at residues 270–274 is G2; that stretch reads GITQH. Residues 291-294 form a G3 region; it reads DTPG. Residues 291–295 and 345–348 contribute to the GTP site; these read DTPGH and NKMD. The segment at 345–348 is G4; that stretch reads NKMD. The tract at residues 381–383 is G5; sequence SAK.

Belongs to the TRAFAC class translation factor GTPase superfamily. Classic translation factor GTPase family. IF-2 subfamily.

It is found in the cytoplasm. One of the essential components for the initiation of protein synthesis. Protects formylmethionyl-tRNA from spontaneous hydrolysis and promotes its binding to the 30S ribosomal subunits. Also involved in the hydrolysis of GTP during the formation of the 70S ribosomal complex. The protein is Translation initiation factor IF-2 of Geobacillus thermodenitrificans (strain NG80-2).